Reading from the N-terminus, the 419-residue chain is eIF5-mimic protein 1 (419 aa).

The interval 1-22 (MNKHQKPVLTGQRFKTRKRDEK) is disordered. Lys-117 carries the post-translational modification N6-acetyllysine. The 168-residue stretch at 248-415 (VQQSLGTRKE…QNAEEESESE (168 aa)) folds into the W2 domain. Phosphoserine is present on residues Ser-412, Ser-414, and Ser-419.

Belongs to the BZW family. In terms of assembly, interacts with EIF3E, EIF2S2 and EIF3C. As to expression, expressed at high levels in heart, and at lower levels in skeletal muscle, spleen and lung. Expressed at low levels in brain regions where nascent and immature neurons are present.

It is found in the cytoplasm. Its function is as follows. Translation initiation regulator which represses non-AUG initiated translation and repeat-associated non-AUG (RAN) initiated translation by acting as a competitive inhibitor of eukaryotic translation initiation factor 5 (EIF5) function. Increases the accuracy of translation initiation by impeding EIF5-dependent translation from non-AUG codons by competing with it for interaction with EIF2S2 within the 43S pre-initiation complex (PIC) in an EIF3C-binding dependent manner. This chain is eIF5-mimic protein 1 (Bzw2), found in Rattus norvegicus (Rat).